A 180-amino-acid polypeptide reads, in one-letter code: Large ribosomal subunit protein uL6 (180 aa).

Belongs to the universal ribosomal protein uL6 family. Part of the 50S ribosomal subunit.

Its function is as follows. This protein binds to the 23S rRNA, and is important in its secondary structure. It is located near the subunit interface in the base of the L7/L12 stalk, and near the tRNA binding site of the peptidyltransferase center. The chain is Large ribosomal subunit protein uL6 from Clostridium kluyveri (strain NBRC 12016).